We begin with the raw amino-acid sequence, 528 residues long: Chromosomal replication initiator protein DnaA (528 aa).

Residues 1–104 (MNDDPNALAR…PVDDEPESDP (104 aa)) form a domain I, interacts with DnaA modulators region. Residues 95–158 (PVDDEPESDP…TDFEEVDDDR (64 aa)) are disordered. A compositionally biased stretch (basic and acidic residues) spans 104–123 (PPSRDHRPEPEPLHTPRHLE). Residues 105–187 (PSRDHRPEPE…GPAPSATGGN (83 aa)) are domain II. Acidic residues predominate over residues 149-158 (TDFEEVDDDR). The domain III, AAA+ region stretch occupies residues 188–404 (SLNAKYTFDT…GALIRVTAFA (217 aa)). ATP is bound by residues glycine 232, glycine 234, lysine 235, and threonine 236. The domain IV, binds dsDNA stretch occupies residues 405-528 (SLNRQPLDLT…TARIKQRSKR (124 aa)).

This sequence belongs to the DnaA family. As to quaternary structure, oligomerizes as a right-handed, spiral filament on DNA at oriC.

It is found in the cytoplasm. Functionally, plays an essential role in the initiation and regulation of chromosomal replication. ATP-DnaA binds to the origin of replication (oriC) to initiate formation of the DNA replication initiation complex once per cell cycle. Binds the DnaA box (a 9 base pair repeat at the origin) and separates the double-stranded (ds)DNA. Forms a right-handed helical filament on oriC DNA; dsDNA binds to the exterior of the filament while single-stranded (ss)DNA is stabiized in the filament's interior. The ATP-DnaA-oriC complex binds and stabilizes one strand of the AT-rich DNA unwinding element (DUE), permitting loading of DNA polymerase. After initiation quickly degrades to an ADP-DnaA complex that is not apt for DNA replication. Binds acidic phospholipids. The sequence is that of Chromosomal replication initiator protein DnaA from Rhodococcus jostii (strain RHA1).